A 119-amino-acid polypeptide reads, in one-letter code: Beta-2-microglobulin (119 aa).

Positions 1–20 (MARFVVAALLVLLSLSGLEA) are cleaved as a signal peptide. The region spanning 25 to 114 (PKIQVYSRHP…MTFPAPKTVK (90 aa)) is the Ig-like C1-type domain. Cysteines 45 and 100 form a disulfide.

It belongs to the beta-2-microglobulin family. In terms of assembly, heterodimer of an alpha chain and a beta chain. Beta-2-microglobulin is the beta-chain of major histocompatibility complex class I molecules.

It is found in the secreted. Its function is as follows. Component of the class I major histocompatibility complex (MHC). Involved in the presentation of peptide antigens to the immune system. This is Beta-2-microglobulin (B2M) from Pithecia irrorata (Gray monk saki).